The following is a 473-amino-acid chain: ATP synthase subunit beta (473 aa).

Residue 153 to 160 (GGAGVGKT) coordinates ATP.

The protein belongs to the ATPase alpha/beta chains family. F-type ATPases have 2 components, CF(1) - the catalytic core - and CF(0) - the membrane proton channel. CF(1) has five subunits: alpha(3), beta(3), gamma(1), delta(1), epsilon(1). CF(0) has three main subunits: a(1), b(2) and c(9-12). The alpha and beta chains form an alternating ring which encloses part of the gamma chain. CF(1) is attached to CF(0) by a central stalk formed by the gamma and epsilon chains, while a peripheral stalk is formed by the delta and b chains.

The protein localises to the cell inner membrane. It carries out the reaction ATP + H2O + 4 H(+)(in) = ADP + phosphate + 5 H(+)(out). Functionally, produces ATP from ADP in the presence of a proton gradient across the membrane. The catalytic sites are hosted primarily by the beta subunits. In Rickettsia rickettsii (strain Iowa), this protein is ATP synthase subunit beta.